The following is a 339-amino-acid chain: Glycerol-3-phosphate dehydrogenase [NAD(P)+] (339 aa).

4 residues coordinate NADPH: Ser15, Tyr16, His36, and Lys110. Lys110, Gly139, and Thr141 together coordinate sn-glycerol 3-phosphate. Ala143 is an NADPH binding site. 5 residues coordinate sn-glycerol 3-phosphate: Lys195, Asp248, Ser258, Arg259, and Asn260. Catalysis depends on Lys195, which acts as the Proton acceptor. Arg259 is an NADPH binding site. Residues Val283 and Glu285 each coordinate NADPH.

The protein belongs to the NAD-dependent glycerol-3-phosphate dehydrogenase family.

It localises to the cytoplasm. The enzyme catalyses sn-glycerol 3-phosphate + NAD(+) = dihydroxyacetone phosphate + NADH + H(+). The catalysed reaction is sn-glycerol 3-phosphate + NADP(+) = dihydroxyacetone phosphate + NADPH + H(+). The protein operates within membrane lipid metabolism; glycerophospholipid metabolism. Functionally, catalyzes the reduction of the glycolytic intermediate dihydroxyacetone phosphate (DHAP) to sn-glycerol 3-phosphate (G3P), the key precursor for phospholipid synthesis. This Shigella dysenteriae serotype 1 (strain Sd197) protein is Glycerol-3-phosphate dehydrogenase [NAD(P)+].